The chain runs to 108 residues: Putative pterin-4-alpha-carbinolamine dehydratase (108 aa).

The protein belongs to the pterin-4-alpha-carbinolamine dehydratase family.

It catalyses the reaction (4aS,6R)-4a-hydroxy-L-erythro-5,6,7,8-tetrahydrobiopterin = (6R)-L-erythro-6,7-dihydrobiopterin + H2O. The sequence is that of Putative pterin-4-alpha-carbinolamine dehydratase from Bordetella avium (strain 197N).